Consider the following 336-residue polypeptide: Holliday junction branch migration complex subunit RuvB (336 aa).

Positions 1-185 are large ATPase domain (RuvB-L); that stretch reads MSIIVERLLS…FGVLSRVEYY (185 aa). ATP contacts are provided by residues L24, R25, G66, K69, T70, T71, 132-134, R175, Y185, and R222; that span reads EDF. T70 contacts Mg(2+). The interval 186 to 256 is small ATPAse domain (RuvB-S); sequence TVDQLSAIVE…ITQMALELLQ (71 aa). The tract at residues 259–336 is head domain (RuvB-H); it reads KLGLDHIDHK…EHFGMEIPKV (78 aa). 2 residues coordinate DNA: R314 and R319.

It belongs to the RuvB family. Homohexamer. Forms an RuvA(8)-RuvB(12)-Holliday junction (HJ) complex. HJ DNA is sandwiched between 2 RuvA tetramers; dsDNA enters through RuvA and exits via RuvB. An RuvB hexamer assembles on each DNA strand where it exits the tetramer. Each RuvB hexamer is contacted by two RuvA subunits (via domain III) on 2 adjacent RuvB subunits; this complex drives branch migration. In the full resolvosome a probable DNA-RuvA(4)-RuvB(12)-RuvC(2) complex forms which resolves the HJ.

It localises to the cytoplasm. The catalysed reaction is ATP + H2O = ADP + phosphate + H(+). The RuvA-RuvB-RuvC complex processes Holliday junction (HJ) DNA during genetic recombination and DNA repair, while the RuvA-RuvB complex plays an important role in the rescue of blocked DNA replication forks via replication fork reversal (RFR). RuvA specifically binds to HJ cruciform DNA, conferring on it an open structure. The RuvB hexamer acts as an ATP-dependent pump, pulling dsDNA into and through the RuvAB complex. RuvB forms 2 homohexamers on either side of HJ DNA bound by 1 or 2 RuvA tetramers; 4 subunits per hexamer contact DNA at a time. Coordinated motions by a converter formed by DNA-disengaged RuvB subunits stimulates ATP hydrolysis and nucleotide exchange. Immobilization of the converter enables RuvB to convert the ATP-contained energy into a lever motion, pulling 2 nucleotides of DNA out of the RuvA tetramer per ATP hydrolyzed, thus driving DNA branch migration. The RuvB motors rotate together with the DNA substrate, which together with the progressing nucleotide cycle form the mechanistic basis for DNA recombination by continuous HJ branch migration. Branch migration allows RuvC to scan DNA until it finds its consensus sequence, where it cleaves and resolves cruciform DNA. The chain is Holliday junction branch migration complex subunit RuvB from Bacillus cereus (strain ATCC 14579 / DSM 31 / CCUG 7414 / JCM 2152 / NBRC 15305 / NCIMB 9373 / NCTC 2599 / NRRL B-3711).